Consider the following 422-residue polypeptide: Signal recognition particle receptor FtsY (422 aa).

The tract at residues Pro39–Arg86 is disordered. Residues Tyr50–Pro66 are compositionally biased toward polar residues. GTP contacts are provided by residues Gly230–Thr237, Asp312–Arg316, and Thr374–Asp377.

This sequence belongs to the GTP-binding SRP family. FtsY subfamily. As to quaternary structure, part of the signal recognition particle protein translocation system, which is composed of SRP and FtsY.

Its subcellular location is the cell membrane. The protein localises to the cytoplasm. The enzyme catalyses GTP + H2O = GDP + phosphate + H(+). Involved in targeting and insertion of nascent membrane proteins into the cytoplasmic membrane. Acts as a receptor for the complex formed by the signal recognition particle (SRP) and the ribosome-nascent chain (RNC). In Mycobacterium bovis (strain ATCC BAA-935 / AF2122/97), this protein is Signal recognition particle receptor FtsY.